We begin with the raw amino-acid sequence, 414 residues long: Phosphoglycerate kinase (414 aa).

Substrate-binding positions include 19 to 21 (DLN), arginine 34, 57 to 60 (HQSK), arginine 114, and arginine 154. Residues glutamate 332 and 358 to 361 (GGHS) contribute to the ATP site.

It belongs to the phosphoglycerate kinase family. In terms of assembly, monomer.

The protein localises to the cytoplasm. It carries out the reaction (2R)-3-phosphoglycerate + ATP = (2R)-3-phospho-glyceroyl phosphate + ADP. It participates in carbohydrate degradation; glycolysis; pyruvate from D-glyceraldehyde 3-phosphate: step 2/5. This chain is Phosphoglycerate kinase, found in Thermococcus onnurineus (strain NA1).